The chain runs to 293 residues: 3-hydroxybutyryl-CoA dehydrogenase (293 aa).

It belongs to the 3-hydroxyacyl-CoA dehydrogenase family.

The enzyme catalyses (3S)-3-hydroxybutanoyl-CoA + NADP(+) = acetoacetyl-CoA + NADPH + H(+). The protein operates within lipid metabolism; butanoate metabolism. This is 3-hydroxybutyryl-CoA dehydrogenase (hbdA) from Bradyrhizobium diazoefficiens (strain JCM 10833 / BCRC 13528 / IAM 13628 / NBRC 14792 / USDA 110).